We begin with the raw amino-acid sequence, 298 residues long: HTH-type transcriptional regulator ArgP (298 aa).

Residues 4 to 60 (VDYRWVAALDAVIAQRGFERAAEKLCITQSAVSQRIKQLEKLMAQPLLVREQPPRPT) form the HTH lysR-type domain. Positions 21–40 (FERAAEKLCITQSAVSQRIK) form a DNA-binding region, H-T-H motif.

Belongs to the LysR transcriptional regulatory family. As to quaternary structure, homodimer.

Controls the transcription of genes involved in arginine and lysine metabolism. The chain is HTH-type transcriptional regulator ArgP from Photobacterium profundum (strain SS9).